The following is a 563-amino-acid chain: Arginine--tRNA ligase (563 aa).

The 'HIGH' region motif lies at 120–130; that stretch reads PNIAKPFHVGH.

This sequence belongs to the class-I aminoacyl-tRNA synthetase family. As to quaternary structure, monomer.

The protein resides in the cytoplasm. The catalysed reaction is tRNA(Arg) + L-arginine + ATP = L-arginyl-tRNA(Arg) + AMP + diphosphate. This Clostridium botulinum (strain Alaska E43 / Type E3) protein is Arginine--tRNA ligase.